Consider the following 454-residue polypeptide: Bifunctional protein GlmU (454 aa).

The tract at residues 1–226 is pyrophosphorylase; sequence MTTTVIILAA…AFEVEGVNDR (226 aa). Residues 8-11, Lys-22, Gln-73, 78-79, 100-102, Gly-137, Glu-151, Asn-166, and Asn-224 contribute to the UDP-N-acetyl-alpha-D-glucosamine site; these read LAAG, GT, and YGD. Residue Asp-102 coordinates Mg(2+). Asn-224 serves as a coordination point for Mg(2+). Residues 227 to 247 form a linker region; the sequence is LQLAALEREFQLQQAKSLMQQ. Residues 248 to 454 are N-acetyltransferase; the sequence is GVTLTDPSRF…NYQRPQKLKK (207 aa). UDP-N-acetyl-alpha-D-glucosamine-binding residues include Arg-330 and Lys-348. His-360 serves as the catalytic Proton acceptor. UDP-N-acetyl-alpha-D-glucosamine is bound by residues Tyr-363 and Asn-374. Residues Ala-377, 383–384, Ser-402, Ala-420, and Arg-437 contribute to the acetyl-CoA site; that span reads NY.

The protein in the N-terminal section; belongs to the N-acetylglucosamine-1-phosphate uridyltransferase family. It in the C-terminal section; belongs to the transferase hexapeptide repeat family. Homotrimer. It depends on Mg(2+) as a cofactor.

It is found in the cytoplasm. It carries out the reaction alpha-D-glucosamine 1-phosphate + acetyl-CoA = N-acetyl-alpha-D-glucosamine 1-phosphate + CoA + H(+). The enzyme catalyses N-acetyl-alpha-D-glucosamine 1-phosphate + UTP + H(+) = UDP-N-acetyl-alpha-D-glucosamine + diphosphate. Its pathway is nucleotide-sugar biosynthesis; UDP-N-acetyl-alpha-D-glucosamine biosynthesis; N-acetyl-alpha-D-glucosamine 1-phosphate from alpha-D-glucosamine 6-phosphate (route II): step 2/2. The protein operates within nucleotide-sugar biosynthesis; UDP-N-acetyl-alpha-D-glucosamine biosynthesis; UDP-N-acetyl-alpha-D-glucosamine from N-acetyl-alpha-D-glucosamine 1-phosphate: step 1/1. It participates in bacterial outer membrane biogenesis; LPS lipid A biosynthesis. Functionally, catalyzes the last two sequential reactions in the de novo biosynthetic pathway for UDP-N-acetylglucosamine (UDP-GlcNAc). The C-terminal domain catalyzes the transfer of acetyl group from acetyl coenzyme A to glucosamine-1-phosphate (GlcN-1-P) to produce N-acetylglucosamine-1-phosphate (GlcNAc-1-P), which is converted into UDP-GlcNAc by the transfer of uridine 5-monophosphate (from uridine 5-triphosphate), a reaction catalyzed by the N-terminal domain. The sequence is that of Bifunctional protein GlmU from Acinetobacter baylyi (strain ATCC 33305 / BD413 / ADP1).